A 1572-amino-acid chain; its full sequence is MASSAREHLLFVRRRNPQMRYTLSPENLQSLAAQSSMPENMTLQRANSDTDLVTSESRSSLTASMYEYTLGQAQNLIIFWDIKEEVDPSDWIGLYHIDENSPANFWDSKNRGVTGTQKGQIVWRIEPGPYFMEPEIKICFKYYHGISGALRATTPCITVKNPAVMMGAEGMEGGASGNLHSRKLVSFTLSDLRAVGLKKGMFFNPDPYLKMSIQPGKKSSFPTCAHHGQERRSTIISNTTNPIWHREKYSFFALLTDVLEIEIKDKFAKSRPIIKRFLGKLTIPVQRLLERQAIGDQMLSYNLGRRLPADHVSGYLQFKVEVTSSVHEDASPEAVGTILGVNSVNGDLGSPSDDEDMPGSHHDSQVCSNGPVSEDSAADGTPKHSFRTSSTLEIDTEELTSTSSRTSPPRGRQDSLNDYLDAIEHNGHSRPGTATCSERSMGASPKLRSSFPTDTRLNAMLHIDSDEEDHEFQQDLGYPSSLEEEGGLIMFSRASRADDGSLTSQTKLEDNPVENEEASTHEAASFEDKPENLPELAESSLPAGPAPEEGEGGPEPQPSADQGSAELCGSQEVDQPTSGADTGTSDASGGSRRAVSETESLDQGSEPSQVSSETEPSDPARTESVSEASTRPEGESDLECADSSCNESVTTQLSSVDTRCSSLESARFPETPAFSSQEEEDGACAAEPTSSGPAEGSQESVCTAGSLPVVQVPSGEDEGPGAESATVPDQEELGEVWQRRGSLEGAAAAAESPPQEEGSAGEAQGTCEGATAQEEGATGGSQANGHQPLRSLPSVRQDVSRYQRVDEALPPNWEARIDSHGRIFYVDHVNRTTTWQRPTAPPAPQVLQRSNSIQQMEQLNRRYQSIRRTMTNERPEENTNAIDGAGEEADFHQASADFRRENILPHSTSRSRITLLLQSPPVKFLISPEFFTVLHSNPSAYRMFTNNTCLKHMITKVRRDTHHFERYQHNRDLVGFLNMFANKQLELPRGWEMKHDHQGKAFFVDHNSRTTTFIDPRLPLQSSRPTSALVHRQHLTRQRSHSAGEVGEDSRHAGPPVLPRPSSTFNTVSRPQYQDMVPVAYNDKIVAFLRQPNIFEILQERQPDLTRNHSLREKIQFIRTEGTPGLVRLSSDADLVMLLSLFEEEIMSYVPPHALLHPSYCQSPRGSPVSSPQNSPGTQRANARAPAPYKRDFEAKLRNFYRKLETKGYGQGPGKLKLIIRRDHLLEDAFNQIMGYSRKDLQRNKLYVTFVGEEGLDYSGPSREFFFLVSRELFNPYYGLFEYSANDTYTVQISPMSAFVDNHHEWFRFSGRILGLALIHQYLLDAFFTRPFYKALLRILCDLSDLEYLDEEFHQSLQWMKDNDIHDILDLTFTVNEEVFGQITERELKPGGANIPVTEKNKKEYIERMVKWRIERGVVQQTESLVRGFYEVVDARLVSVFDARELELVIAGTAEIDLSDWRNNTEYRGGYHDNHIVIRWFWAAVERFNNEQRLRLLQFVTGTSSIPYEGFASLRGSNGPRRFCVEKWGKITALPRAHTCFNRLDLPPYPSFSMLYEKLLTAVEETSTFGLE.

S48 is subject to Phosphoserine. One can recognise a C2 domain in the interval G167 to Y301. Disordered regions lie at residues V341–P452 and I489–R796. The span at T400–R410 shows a compositional bias: low complexity. The span at A518–N532 shows a compositional bias: basic and acidic residues. 4 stretches are compositionally biased toward polar residues: residues E572–S588, E597–T614, S643–E664, and P688–T703. The interval W737–V1068 is interaction with TP73. Low complexity predominate over residues E744–G776. In terms of domain architecture, WW 1 spans E807–A840. A coiled-coil region spans residues L847 to R874. Residues S852 and S909 each carry the phosphoserine modification. One can recognise a WW 2 domain in the interval L985 to L1018. Disordered regions lie at residues R1024–S1069 and C1161–A1187. Residues H1031–S1040 are compositionally biased toward basic residues. Over residues C1161–A1181 the composition is skewed to polar residues. The residue at position 1175 (S1175) is a Phosphoserine. The 336-residue stretch at S1237–E1572 folds into the HECT domain. Residue C1540 is the Glycyl thioester intermediate of the active site.

In terms of assembly, interacts with TP73. Interacts with FZR1. In terms of processing, ubiquitinated and degraded during mitotic exit by APC/C-Cdh1. As to expression, predominantly expressed in adult brain, lung and heart.

The protein resides in the cytoplasm. Its subcellular location is the cytoskeleton. It localises to the spindle. It carries out the reaction S-ubiquitinyl-[E2 ubiquitin-conjugating enzyme]-L-cysteine + [acceptor protein]-L-lysine = [E2 ubiquitin-conjugating enzyme]-L-cysteine + N(6)-ubiquitinyl-[acceptor protein]-L-lysine.. Its pathway is protein modification; protein ubiquitination. Functionally, E3 ubiquitin-protein ligase that mediates ubiquitination of TP73. Acts to stabilize TP73 and enhance activation of transcription by TP73. Involved in the regulation of mitotic metaphase/anaphase transition. This Homo sapiens (Human) protein is E3 ubiquitin-protein ligase HECW2 (HECW2).